The chain runs to 482 residues: Membrane-bound lytic murein transglycosylase F (482 aa).

Positions 1–13 are cleaved as a signal peptide; the sequence is MKGLFLRIITALA. Residues 14–267 are non-LT domain; it reads LLFWAIDMVF…NLKEKYLGHI (254 aa). The segment at 268–482 is LT domain; sequence SQFDYVDTRS…NLEEIKENKD (215 aa). The active site involves glutamate 312.

It in the N-terminal section; belongs to the bacterial solute-binding protein 3 family. This sequence in the C-terminal section; belongs to the transglycosylase Slt family.

It localises to the cell outer membrane. The enzyme catalyses Exolytic cleavage of the (1-&gt;4)-beta-glycosidic linkage between N-acetylmuramic acid (MurNAc) and N-acetylglucosamine (GlcNAc) residues in peptidoglycan, from either the reducing or the non-reducing ends of the peptidoglycan chains, with concomitant formation of a 1,6-anhydrobond in the MurNAc residue.. Functionally, murein-degrading enzyme that degrades murein glycan strands and insoluble, high-molecular weight murein sacculi, with the concomitant formation of a 1,6-anhydromuramoyl product. Lytic transglycosylases (LTs) play an integral role in the metabolism of the peptidoglycan (PG) sacculus. Their lytic action creates space within the PG sacculus to allow for its expansion as well as for the insertion of various structures such as secretion systems and flagella. The chain is Membrane-bound lytic murein transglycosylase F from Haemophilus influenzae (strain PittEE).